The sequence spans 649 residues: Macrolide export ATP-binding/permease protein MacB 1 (649 aa).

The ABC transporter domain occupies 5–243 (LELEGIRRSY…AAAELMSLTP (239 aa)). 41-48 (GASGSGKS) provides a ligand contact to ATP. The next 5 helical transmembrane spans lie at 274 to 294 (ALTMLGIIIGIASVVSILVVG), 420 to 440 (VVGQVILVGNMPATVVGVVAE), 524 to 544 (LFLTLVAVISLVVGGIGVMNI), 578 to 598 (VLVCLIGGALGISLSFAIGLI), and 608 to 628 (IAFPPMALFSAFLCSTVIGVV).

This sequence belongs to the ABC transporter superfamily. Macrolide exporter (TC 3.A.1.122) family. Homodimer. Part of the tripartite efflux system MacAB-TolC, which is composed of an inner membrane transporter, MacB, a periplasmic membrane fusion protein, MacA, and an outer membrane component, TolC. The complex forms a large protein conduit and can translocate molecules across both the inner and outer membranes. Interacts with MacA.

The protein localises to the cell inner membrane. In terms of biological role, part of the tripartite efflux system MacAB-TolC. MacB is a non-canonical ABC transporter that contains transmembrane domains (TMD), which form a pore in the inner membrane, and an ATP-binding domain (NBD), which is responsible for energy generation. Confers resistance against macrolides. This chain is Macrolide export ATP-binding/permease protein MacB 1, found in Yersinia pestis bv. Antiqua (strain Antiqua).